We begin with the raw amino-acid sequence, 1445 residues long: MSRPSSVSPRPPAPSGGGTGGGGGGSGGGGGGGGGGPASCGPGGGGRAKGLKDIRIDEEVKIAVNIALERFRYGDQREMEFPSSLTSTERAFIHRLSQSLGLVSKSKGKGANRYLTVKKKDGSETAHAMMTCNLTHNTKHAVRSLIQRFPVTNKERTELLPKTERGNVFAVEAENREMSKTSGRLNNGIPQVPVKRGESEFDSFRQSLPVFEKQEEIVKIIKENKVVLIVGETGSGKTTQIPQFLLDDCFKNGIPCRIFCTQPRRLAAIAVAERVAAERRERIGQTIGYQIRLESRVSPKTLLTFCTNGVLLRTLMAGDSTLSTVTHVIVDEVHERDRFSDFLLTKLRDLLQKHPTLKLILSSAALDVNLFIRYFGSCPVIYIQGRPFEVKEMFLEDILRTTGYTNKEMLKYKKEKQREEKQQTTLTEWYSAQENTFKPESQRQRAVASVSEEYDLLDDGGDAVFSQLTEKDVNCLEPWLIKEMDACLSDIWLHKDVDAFAQVFHLILTENVSVDYRHSETSATALMVAAGRGFTSQVEQLISMGANVHSKASNGWMALDWAKHFGQTEIVDLLESYSASLEFGNLDESSLVQTNGNDLSAEDRELLKAYHHSFDDEKVDLDLIMHLLYNICHSCDAGAILIFLPGYDEIVGLRDRILFDDKRFADNTHRYQVFMLHSNMQTSDQKKVLKNPPAGVRKIILSTNIAETSITVNDVVFVIDSGKVKEKSFDALNFVTMLKMVWISKASAIQRKGRAGRCRPGICFRLFSRLRFQNMLEFQTPELLRMPLQELCLHTKLLAPVNCTIADFLMKAPEPPPALIVRNAVQMLKTIDAMDAWEDLTELGYHLADLPVEPHLGKMVLCAVVLKCLDPILTIACTLAYRDPFVLPTQASQKRAAMLCRKRFTAGTFSDHMALLRAFQAWQKARSDGWERAFCEKNFLSQATMEIIIGMRTQLLGQLRASGFVRARGGGDIRDVNTNSENWAVVKAALVAGMYPNLVHVDRENVILTGPKEKKVRFHPTSVLSQPQYKKIPPANGQAAAIQALPTDWLIYDEMTRAHRIANIRCCSAVTPVTVLVFCGPARLASNALQEPSSFRADGIPNDSSDSEMEDRTTANLAALKLDEWLNFKLEPEAASLLLQLRQKWHSLFLRRMRAPSKPWSQVDEATIRAIIAVLSTEEQSAGLQQPSGIGQRPRPMSSEELPLASSWRSNNSRKSTADTEFADGSTTGERVLMKSPSPALHPPQKYKDRGILHPKRSTDDRSDQSSVKSTDSSSYPSPCASPSPPSSGKGSKSPSPRPNMPIRYFIMKSSNLRNLEISQQKGIWSTTPSNERKLNRAFWESSMVYLVFSVQGSGHFQGFSRMSSEIGREKSQDWGSAGLGGVFKVEWIRKESLPFQFAHHLLNPWNDNKKVQISRDGQELEPQVGEQLLQLWERLPLGEKTTSD.

Residues 1–50 form a disordered region; sequence MSRPSSVSPRPPAPSGGGTGGGGGGSGGGGGGGGGGPASCGPGGGGRAKG. The span at 15–48 shows a compositional bias: gly residues; sequence SGGGTGGGGGGSGGGGGGGGGGPASCGPGGGGRA. Residues 53-121 form the R3H domain; that stretch reads DIRIDEEVKI…NRYLTVKKKD (69 aa). In terms of domain architecture, Helicase ATP-binding spans 218 to 384; that stretch reads VKIIKENKVV…FGSCPVIYIQ (167 aa). 231–238 serves as a coordination point for ATP; that stretch reads GETGSGKT. A DEAH box motif is present at residues 331–334; the sequence is DEVH. 2 ANK repeats span residues 521–553 and 554–586; these read TSAT…SKAS and NGWM…FGNL. The 173-residue stretch at 627 to 799 folds into the Helicase C-terminal domain; the sequence is LLYNICHSCD…ELCLHTKLLA (173 aa). 3 positions are modified to phosphoserine: serine 1104, serine 1105, and serine 1107. Residues 1179–1189 are compositionally biased toward polar residues; it reads EQSAGLQQPSG. The interval 1179 to 1303 is disordered; the sequence is EQSAGLQQPS…SPSPRPNMPI (125 aa). Residues 1246–1264 show a composition bias toward basic and acidic residues; that stretch reads KYKDRGILHPKRSTDDRSD. Over residues 1265 to 1279 the composition is skewed to low complexity; that stretch reads QSSVKSTDSSSYPSP. Phosphoserine is present on residues serine 1278, serine 1282, and serine 1296. The YTH domain occupies 1303 to 1433; that stretch reads IRYFIMKSSN…QVGEQLLQLW (131 aa). RNA is bound by residues 1309–1311, tryptophan 1325, and tryptophan 1375; that span reads KSS.

Belongs to the DEAD box helicase family. DEAH subfamily. In terms of assembly, interacts with MEIOC; binds transcripts that regulate the mitotic cell cycle inhibiting progression into metaphase, thereby allowing meiotic prophase to proceed normally. Interacts (via ANK repeats) with XRN1. Interacts with ZCCHC4. Associates with the small ribosomal subunit. Interacts with RBM46. Present in male and female germ cells (at protein level). Highly expressed in testis. Not detected in spermatogonia next to the tubule wall but is strongly expressed in spermatocytes, suggesting that it is up-regulated in germ cells upon entry into meiosis (at protein level).

It localises to the cytoplasm. It is found in the perinuclear region. It carries out the reaction ATP + H2O = ADP + phosphate + H(+). 3'-5' RNA helicase that plays a key role in the male and female germline by promoting transition from mitotic to meiotic divisions in stem cells. Specifically recognizes and binds N6-methyladenosine (m6A)-containing RNAs, a modification present at internal sites of mRNAs and some non-coding RNAs that plays a role in the efficiency of RNA processing and stability. Essential for ensuring a successful progression of the meiotic program in the germline by regulating the level of m6A-containing RNAs. Acts by binding and promoting degradation of m6A-containing mRNAs: the 3'-5' RNA helicase activity is required for this process and RNA degradation may be mediated by XRN1 exoribonuclease. Required for both spermatogenesis and oogenesis. This Mus musculus (Mouse) protein is 3'-5' RNA helicase YTHDC2.